A 378-amino-acid chain; its full sequence is 3,6-diketocamphane 1,6-monooxygenase (378 aa).

FMN is bound by residues His-10, Ser-44, Met-76, and 201 to 209; that span reads TGFSYNSPS.

Belongs to the bacterial luciferase oxidoreductase family. Homodimer. Likely forms a loose transient complex with a P.putida flavin reductase that provides the required FMNH(2) to the enzyme.

The enzyme catalyses (1S,4S)-bornane-2,5-dione + FMNH2 + O2 = (1S,4S)-5-oxo-1,2-campholide + FMN + H2O + H(+). Its function is as follows. Involved in the degradation and assimilation of (-)-camphor, which allows P.putida strain NCIMB 10007 to grow on this enantiomer of camphor as the sole carbon source. Catalyzes the FMNH(2)-dependent lactonization of 3,6-diketocamphane via a Baeyer-Villiger oxidation to produce the unstable lactone 5-oxo-1,2-campholide with (S,S) configuration, that presumably undergoes spontaneous hydrolysis to form 2-oxo-Delta(3)-4,5,5-trimethylcyclopentenylacetate. Is also able to convert (-)-camphor to the corresponding lactone in vitro. Shows no conversion of (+)-camphor, (+)-fenchone, (-)-fenchone, and (+)-nopinone. Acts on other bicyclic ketones but very poorly on a few 2- and 4-substituted monocyclic ketones. The polypeptide is 3,6-diketocamphane 1,6-monooxygenase (Pseudomonas putida (Arthrobacter siderocapsulatus)).